A 405-amino-acid chain; its full sequence is tRNA (uracil(54)-C(5))-methyltransferase (405 aa).

[4Fe-4S] cluster contacts are provided by cysteine 61, cysteine 67, cysteine 70, and cysteine 137. S-adenosyl-L-methionine is bound by residues glutamine 252, tyrosine 278, threonine 283, 299–300 (DS), aspartate 326, and aspartate 340. The active-site Nucleophile is cysteine 367. Residue glutamate 399 is the Proton acceptor of the active site.

This sequence belongs to the class I-like SAM-binding methyltransferase superfamily. RNA M5U methyltransferase family.

It carries out the reaction uridine(54) in tRNA + S-adenosyl-L-methionine = 5-methyluridine(54) in tRNA + S-adenosyl-L-homocysteine + H(+). Its activity is regulated as follows. Activated by magnesium ions. In terms of biological role, catalyzes the formation of 5-methyl-uridine at position 54 (m5U54) in tRNA. The polypeptide is tRNA (uracil(54)-C(5))-methyltransferase (Pyrococcus abyssi (strain GE5 / Orsay)).